A 172-amino-acid chain; its full sequence is NADH-ubiquinone oxidoreductase chain 6 (172 aa).

5 helical membrane passes run 1–21, 27–47, 48–68, 87–107, and 138–158; these read MTYFVLFLGLCFVLGGLAVAS, YGVVGLVLASVAGCAWLLSLG, VSFVSLVLFMVYLGGMLVVFV, VVGYGMGFVAVLVMGMVVGGF, and CGVGMFLVAGWGLLLTLFVVL.

It belongs to the complex I subunit 6 family.

It localises to the mitochondrion membrane. It catalyses the reaction a ubiquinone + NADH + 5 H(+)(in) = a ubiquinol + NAD(+) + 4 H(+)(out). In terms of biological role, core subunit of the mitochondrial membrane respiratory chain NADH dehydrogenase (Complex I) that is believed to belong to the minimal assembly required for catalysis. Complex I functions in the transfer of electrons from NADH to the respiratory chain. The immediate electron acceptor for the enzyme is believed to be ubiquinone. The sequence is that of NADH-ubiquinone oxidoreductase chain 6 (MT-ND6) from Uria lomvia (Thick-billed murre).